A 472-amino-acid polypeptide reads, in one-letter code: Probable glycine dehydrogenase (decarboxylating) subunit 2 (472 aa).

Lys268 carries the N6-(pyridoxal phosphate)lysine modification.

It belongs to the GcvP family. C-terminal subunit subfamily. As to quaternary structure, the glycine cleavage system is composed of four proteins: P, T, L and H. In this organism, the P 'protein' is a heterodimer of two subunits. The cofactor is pyridoxal 5'-phosphate.

The catalysed reaction is N(6)-[(R)-lipoyl]-L-lysyl-[glycine-cleavage complex H protein] + glycine + H(+) = N(6)-[(R)-S(8)-aminomethyldihydrolipoyl]-L-lysyl-[glycine-cleavage complex H protein] + CO2. In terms of biological role, the glycine cleavage system catalyzes the degradation of glycine. The P protein binds the alpha-amino group of glycine through its pyridoxal phosphate cofactor; CO(2) is released and the remaining methylamine moiety is then transferred to the lipoamide cofactor of the H protein. The polypeptide is Probable glycine dehydrogenase (decarboxylating) subunit 2 (Thermoplasma acidophilum (strain ATCC 25905 / DSM 1728 / JCM 9062 / NBRC 15155 / AMRC-C165)).